We begin with the raw amino-acid sequence, 568 residues long: PTS system lactose-specific EIICB component (568 aa).

Residues 8-409 (IEKGKPFFEK…LVDTVIYYPF (402 aa)) enclose the PTS EIIC type-3 domain. Helical transmembrane passes span 30–50 (GFIS…IAYV), 65–85 (MLMT…AGTT), 103–123 (INFI…AADP), 128–148 (GFLS…AAFI), 183–203 (FAFS…VIGV), 222–242 (GYLG…VGIH), 246–266 (IVEP…AHLI), 283–303 (FIVT…FMWL), 339–359 (VFFI…KFFV), and 381–401 (IVLG…LILV). The region spanning 465–568 (ETNVLVLCAG…LAFVEEQFKD (104 aa)) is the PTS EIIB type-3 domain. The active-site Phosphocysteine intermediate; for EIIB activity is Cys472. Position 472 is a phosphocysteine; by EIIA (Cys472).

The protein resides in the cell membrane. The enzyme catalyses lactose(out) + N(pros)-phospho-L-histidyl-[protein] = lactose 6-phosphate(in) + L-histidyl-[protein]. Its function is as follows. The phosphoenolpyruvate-dependent sugar phosphotransferase system (sugar PTS), a major carbohydrate active transport system, catalyzes the phosphorylation of incoming sugar substrates concomitantly with their translocation across the cell membrane. The enzyme II LacEF PTS system is involved in lactose transport. The sequence is that of PTS system lactose-specific EIICB component from Streptococcus mutans serotype c (strain ATCC 700610 / UA159).